The following is a 458-amino-acid chain: Smoothelin-like protein 2 (458 aa).

The stretch at 24–88 (LEGAVRALHE…RQVESLGLTT (65 aa)) forms a coiled coil. 3 disordered regions span residues 87–111 (TTGL…RAPR), 123–142 (FSLS…SELE), and 151–312 (IIEN…GAQA). The span at 94–104 (PGTPSPPPAPG) shows a compositional bias: pro residues. Position 96 is a phosphothreonine (Thr96). Phosphoserine occurs at positions 98, 126, and 131. The segment covering 131 to 142 (SLDHHDEASELE) has biased composition (basic and acidic residues). Composition is skewed to low complexity over residues 158 to 167 (PGADPGDGPP) and 209 to 220 (TSATALSPTSAA). The span at 225–244 (LSSSPSEATTPWTPSPSEKN) shows a compositional bias: polar residues. Over residues 245–254 (SSLPRSLSSS) the composition is skewed to low complexity. Phosphoserine is present on residues Ser252, Ser254, and Ser267. The span at 270 to 283 (LVTPPQSPPSPQPP) shows a compositional bias: pro residues. Residue Thr272 is modified to Phosphothreonine. At Ser276 the chain carries Phosphoserine. A compositionally biased stretch (basic and acidic residues) spans 290 to 299 (RPGERRRELV). Positions 300 to 310 (RSQTLPRTSGA) are enriched in polar residues. Ser341 is modified (phosphoserine). The Calponin-homology (CH) domain occupies 348–455 (SSIKQILLEW…YVQSLYNHLR (108 aa)).

The protein belongs to the smoothelin family.

In Bos taurus (Bovine), this protein is Smoothelin-like protein 2 (SMTNL2).